The chain runs to 519 residues: Alternative NAD(P)H-ubiquinone oxidoreductase C1, chloroplastic/mitochondrial (519 aa).

The transit peptide at 1 to 52 (MAVLSSVSSLIPFSYGATRLTSKASLASRTSGFNLSSRWNSTRNSPMLYLSR) directs the protein to the chloroplast and mitochondrion. Residue 82–118 (RVCILGGGFGGLYTALRLESLVWPEDKKPQVVLVDQS) participates in FAD binding. An NAD(+)-binding site is contributed by 246-282 (IKVAVVGCGYAGVELAATISERLQDRGIVQSINVSKN).

Belongs to the NADH dehydrogenase family. FAD is required as a cofactor. In terms of tissue distribution, flowers, roots, leaves and stems.

The protein resides in the mitochondrion. It is found in the mitochondrion inner membrane. Its subcellular location is the plastid. It localises to the chloroplast. The protein localises to the plastoglobule. It catalyses the reaction a quinone + NADH + H(+) = a quinol + NAD(+). The enzyme catalyses a ubiquinone + NADH + H(+) = a ubiquinol + NAD(+). It carries out the reaction demethylphylloquinone + NADPH + H(+) = demethylphylloquinol + NADP(+). Its activity is regulated as follows. Inhibited by dicumarol. Bifunctional oxidoreductase ables to act both on prenyl naphthoquinones and on prenyl benzoquinones. May serve a respiratory function. Involved in an electron flow toward the plastoglobule plastoquinone pool. Required for plastochromanol-8 accumulation and for phylloquinone (vitamin K1) production. Probably not directly involved in cyclic or chlororespiratory electron flows under standard growth conditions, but participates in the redox metabolism of plastoquinone-9 and the tocophrol recycling-intermediate alpha-tocopherol quinone. Catalyzes the penultimate step in the biosynthesis of vitamin K1. The protein is Alternative NAD(P)H-ubiquinone oxidoreductase C1, chloroplastic/mitochondrial of Arabidopsis thaliana (Mouse-ear cress).